A 363-amino-acid chain; its full sequence is 3-isopropylmalate dehydrogenase (363 aa).

Position 79 to 92 (79 to 92 (GPKWEHLPPNDQPE)) interacts with NAD(+). R100, R110, R139, and D228 together coordinate substrate. Residues D228, D252, and D256 each coordinate Mg(2+). 286 to 298 (GSAPDIAGKNIAN) lines the NAD(+) pocket.

It belongs to the isocitrate and isopropylmalate dehydrogenases family. LeuB type 1 subfamily. In terms of assembly, homodimer. The cofactor is Mg(2+). Mn(2+) is required as a cofactor.

Its subcellular location is the cytoplasm. The enzyme catalyses (2R,3S)-3-isopropylmalate + NAD(+) = 4-methyl-2-oxopentanoate + CO2 + NADH. It functions in the pathway amino-acid biosynthesis; L-leucine biosynthesis; L-leucine from 3-methyl-2-oxobutanoate: step 3/4. In terms of biological role, catalyzes the oxidation of 3-carboxy-2-hydroxy-4-methylpentanoate (3-isopropylmalate) to 3-carboxy-4-methyl-2-oxopentanoate. The product decarboxylates to 4-methyl-2 oxopentanoate. The protein is 3-isopropylmalate dehydrogenase of Vibrio parahaemolyticus serotype O3:K6 (strain RIMD 2210633).